The primary structure comprises 162 residues: Retinoic acid receptor responder protein 2 (162 aa).

Residues 1-20 (MWQLLLPLALGLGTMGLGRA) form the signal peptide. Cystine bridges form between Cys-77/Cys-87, Cys-98/Cys-117, and Cys-101/Cys-135. Residues 156 to 162 (FIKALSP) constitute a propeptide that is removed on maturation.

In terms of processing, secreted in an inactive precursor form, prochemerin, which is proteolytically processed by a variety of extracellular proteases to generate forms with differing levels of bioactivity. For example, the removal of five amino acids results in chemerin-157, which exhibits the highest activity, while removal of six amino acids results in chemerin-156 which has slightly less activity. Some proteases are able to cleave at more than one site and chemerin forms may be sequentially processed by different enzymes to modulate activity levels. The coordinated expression and activity of chemerin-modifying enzymes is essential for regulating its bioactivation, inactivation and, consequently, biological function. Cathepsin G cleaves six C-terminal amino acids from prochemerin (chemerin-156), elastase is able to cleave five (chemerin-157), seven (chemerin-155) or ten (chemerin-152), plasmin cleaves four amino acids (chemerin-158), and tryptase cleaves four (chemerin-158) or seven (chemerin-155). Multiple cleavages might be required to fully activate chemerin, with an initial tryptase cleavage resulting in chemerin with low activity (chemerin-158), and a second cleavage by carboxypeptidase N or B producing highly active chemerin (chemerin-157).

Its subcellular location is the secreted. Its function is as follows. Adipocyte-secreted protein (adipokine) that regulates adipogenesis, metabolism and inflammation through activation of the chemokine-like receptor 1 (CMKLR1). Also acts as a ligand for CMKLR2. Can also bind to C-C chemokine receptor-like 2 (CCRL2), but with a lower affinity than it does to CMKLR1 or CMKLR2. Positively regulates adipocyte differentiation, modulates the expression of adipocyte genes involved in lipid and glucose metabolism and might play a role in angiogenesis, a process essential for the expansion of white adipose tissue. Also acts as a pro-inflammatory adipokine, causing an increase in secretion of pro-inflammatory and prodiabetic adipokines, which further impair adipose tissue metabolic function and have negative systemic effects including impaired insulin sensitivity, altered glucose and lipid metabolism, and a decrease in vascular function in other tissues. Can have both pro- and anti-inflammatory properties depending on the modality of enzymatic cleavage by different classes of proteases. Acts as a chemotactic factor for leukocyte populations expressing CMKLR1, particularly immature plasmacytoid dendritic cells, but also immature myeloid DCs, macrophages and natural killer cells. Exerts an anti-inflammatory role by preventing TNF/TNFA-induced VCAM1 expression and monocytes adhesion in vascular endothelial cells. The effect is mediated via inhibiting activation of NF-kappa-B and CRK/p38 through stimulation of AKT1/NOS3 signaling and nitric oxide production. Exhibits an antimicrobial function in the skin. This Bos taurus (Bovine) protein is Retinoic acid receptor responder protein 2 (RARRES2).